A 166-amino-acid polypeptide reads, in one-letter code: Thioredoxin, mitochondrial (166 aa).

The transit peptide at 1–59 directs the protein to the mitochondrion; it reads MAQRLLLRRFLTSVISRKPPQGVWASLTSTSLQTPPYNAGGLTGTPSPARTFHTTRVCS. In terms of domain architecture, Thioredoxin spans 61–166; it reads TFNVQDGPDF…LEAFLKKLIG (106 aa). Residues Cys90 and Cys93 each act as nucleophile in the active site. A disulfide bridge links Cys90 with Cys93. N6-acetyllysine; alternate is present on Lys152. Lys152 carries the N6-succinyllysine; alternate modification.

It belongs to the thioredoxin family. Monomer. In terms of tissue distribution, expressed in several tissues with the highest expression levels in heart, muscle, kidney and adrenal gland.

The protein resides in the mitochondrion. In terms of biological role, important for the control of mitochondrial reactive oxygen species homeostasis, apoptosis regulation and cell viability. Is involved in various redox reactions including the reduction of protein disulfide bonds, through the reversible oxidation of its active center dithiol to a disulfide. In Rattus norvegicus (Rat), this protein is Thioredoxin, mitochondrial (Txn2).